The primary structure comprises 249 residues: Pyridoxine 5'-phosphate synthase (249 aa).

3-amino-2-oxopropyl phosphate is bound at residue asparagine 7. Residue 9–10 (DH) participates in 1-deoxy-D-xylulose 5-phosphate binding. Arginine 18 provides a ligand contact to 3-amino-2-oxopropyl phosphate. Histidine 43 functions as the Proton acceptor in the catalytic mechanism. 1-deoxy-D-xylulose 5-phosphate-binding residues include arginine 45 and histidine 50. The Proton acceptor role is filled by glutamate 70. Residue threonine 100 coordinates 1-deoxy-D-xylulose 5-phosphate. Histidine 198 serves as the catalytic Proton donor. 3-amino-2-oxopropyl phosphate-binding positions include alanine 199 and 220-221 (GH).

The protein belongs to the PNP synthase family. As to quaternary structure, homooctamer; tetramer of dimers.

Its subcellular location is the cytoplasm. The enzyme catalyses 3-amino-2-oxopropyl phosphate + 1-deoxy-D-xylulose 5-phosphate = pyridoxine 5'-phosphate + phosphate + 2 H2O + H(+). Its pathway is cofactor biosynthesis; pyridoxine 5'-phosphate biosynthesis; pyridoxine 5'-phosphate from D-erythrose 4-phosphate: step 5/5. Catalyzes the complicated ring closure reaction between the two acyclic compounds 1-deoxy-D-xylulose-5-phosphate (DXP) and 3-amino-2-oxopropyl phosphate (1-amino-acetone-3-phosphate or AAP) to form pyridoxine 5'-phosphate (PNP) and inorganic phosphate. In Azoarcus sp. (strain BH72), this protein is Pyridoxine 5'-phosphate synthase.